The chain runs to 101 residues: Small ribosomal subunit protein uS14 (101 aa).

The protein belongs to the universal ribosomal protein uS14 family. Part of the 30S ribosomal subunit. Contacts proteins S3 and S10.

Its function is as follows. Binds 16S rRNA, required for the assembly of 30S particles and may also be responsible for determining the conformation of the 16S rRNA at the A site. The polypeptide is Small ribosomal subunit protein uS14 (Stutzerimonas stutzeri (strain A1501) (Pseudomonas stutzeri)).